The sequence spans 310 residues: Malate dehydrogenase (310 aa).

NAD(+) is bound by residues 7 to 13 (GAAGGIG) and aspartate 34. Substrate is bound by residues arginine 81 and arginine 87. Residues asparagine 94 and 117 to 119 (ITN) each bind NAD(+). Residues asparagine 119 and arginine 153 each coordinate substrate. Catalysis depends on histidine 177, which acts as the Proton acceptor. Methionine 227 is a binding site for NAD(+).

It belongs to the LDH/MDH superfamily. MDH type 1 family. As to quaternary structure, homodimer.

The enzyme catalyses (S)-malate + NAD(+) = oxaloacetate + NADH + H(+). Its function is as follows. Catalyzes the reversible oxidation of malate to oxaloacetate. The protein is Malate dehydrogenase of Vibrio vulnificus (strain CMCP6).